Reading from the N-terminus, the 140-residue chain is Phosphoribosyl-AMP cyclohydrolase (140 aa).

Asp-78 serves as a coordination point for Mg(2+). Cys-79 is a binding site for Zn(2+). Mg(2+) is bound by residues Asp-80 and Asp-82. The Zn(2+) site is built by Cys-96 and Cys-103.

This sequence belongs to the PRA-CH family. Homodimer. Requires Mg(2+) as cofactor. Zn(2+) is required as a cofactor.

It is found in the cytoplasm. The enzyme catalyses 1-(5-phospho-beta-D-ribosyl)-5'-AMP + H2O = 1-(5-phospho-beta-D-ribosyl)-5-[(5-phospho-beta-D-ribosylamino)methylideneamino]imidazole-4-carboxamide. It functions in the pathway amino-acid biosynthesis; L-histidine biosynthesis; L-histidine from 5-phospho-alpha-D-ribose 1-diphosphate: step 3/9. In terms of biological role, catalyzes the hydrolysis of the adenine ring of phosphoribosyl-AMP. The polypeptide is Phosphoribosyl-AMP cyclohydrolase (Ralstonia nicotianae (strain ATCC BAA-1114 / GMI1000) (Ralstonia solanacearum)).